Here is a 685-residue protein sequence, read N- to C-terminus: Amino acid transporter heavy chain SLC3A1 (685 aa).

The segment covering M1 to I11 has biased composition (basic and acidic residues). Residues M1 to E56 are disordered. The Cytoplasmic segment spans residues M1–E87. The residue at position 10 (S10) is a Phosphoserine. Residues I88–I108 form a helical; Signal-anchor for type II membrane protein membrane-spanning segment. Residues A109 to C685 are Extracellular-facing. Residue N214 participates in Ca(2+) binding. N214 and N261 each carry an N-linked (GlcNAc...) asparagine glycan. The cysteines at positions 242 and 273 are disulfide-linked. D284, F318, L319, and E321 together coordinate Ca(2+). 4 N-linked (GlcNAc...) asparagine glycosylation sites follow: N332, N495, N513, and N575. 2 cysteine pairs are disulfide-bonded: C571–C666 and C673–C685.

Disulfide-linked heterodimer composed of the catalytic light subunit SLC7A9 and the heavy subunit SLC3A1. The heterodimer is the minimal functional unit. Assembles in non-covalently linked heterotetramers (dimers of heterodimers) and higher order oligomers; the oligomerization is mediated by SLC3A1 likely to prevent degradation in the endoplasmic reticulum and facilitate heteromer trafficking to the plasma membrane. Disulfide-linked heterodimer composed of the catalytic light subunit SLC7A13 and the heavy subunit SLC3A1. In terms of tissue distribution, expressed in the brush border membrane in the kidney (at protein level). Predominantly expressed in the kidney, small intestine and pancreas. Weakly expressed in liver.

Its subcellular location is the cell membrane. The protein localises to the apical cell membrane. In terms of biological role, acts as a chaperone that facilitates biogenesis and trafficking of functional transporter heteromers to the plasma membrane. Associates with SLC7A9 to form a functional transporter complex that mediates the electrogenic exchange between cationic amino acids and neutral amino acids, with a stoichiometry of 1:1. SLC7A9-SLC3A1 transporter has system b(0,+)-like activity with high affinity for extracellular cationic amino acids and L-cystine and lower affinity for intracellular neutral amino acids. Substrate exchange is driven by high concentration of intracellular neutral amino acids and the intracellular reduction of L-cystine to L-cysteine. SLC7A9-SLC3A1 acts as a major transporter for reabsorption of L-cystine and dibasic amino acids across the brush border membrane in early proximal tubules. Associates with SLC7A13 to form a functional complex that transports anionic and neutral amino acids via exchange or facilitated diffusion. SLC7A13-SLC3A1 may act as a major transporter for L-cystine in late proximal tubules, ensuring its reabsorption from the luminal fluid in exchange for cytosolic L-glutamate or L-aspartate. This chain is Amino acid transporter heavy chain SLC3A1, found in Homo sapiens (Human).